Consider the following 196-residue polypeptide: Probable GTP-binding protein EngB (196 aa).

Residues Asn-22–Gln-196 enclose the EngB-type G domain. Residues Gly-30–Ser-37, Gly-57–Thr-61, Asp-75–Gly-78, Thr-142–Asp-145, and Phe-175–Ser-177 each bind GTP. Residues Ser-37 and Thr-59 each contribute to the Mg(2+) site.

The protein belongs to the TRAFAC class TrmE-Era-EngA-EngB-Septin-like GTPase superfamily. EngB GTPase family. The cofactor is Mg(2+).

In terms of biological role, necessary for normal cell division and for the maintenance of normal septation. This chain is Probable GTP-binding protein EngB, found in Lactobacillus acidophilus (strain ATCC 700396 / NCK56 / N2 / NCFM).